A 191-amino-acid chain; its full sequence is Elongation factor P-like protein (191 aa).

The protein belongs to the elongation factor P family.

The chain is Elongation factor P-like protein from Photobacterium profundum (strain SS9).